Here is a 334-residue protein sequence, read N- to C-terminus: Protein-methionine-sulfoxide reductase catalytic subunit MsrP (334 aa).

A signal peptide (tat-type signal) is located at residues 1–44 (MKKNQFLKESDVTAESVFFMKRRQVLKALGISAAALSLPHAAHA). Mo-molybdopterin is bound by residues N88, 91 to 92 (YE), C146, T181, N233, R238, and 249 to 251 (GIK).

The protein belongs to the MsrP family. Heterodimer of a catalytic subunit (MsrP) and a heme-binding subunit (MsrQ). Mo-molybdopterin serves as cofactor. Predicted to be exported by the Tat system. The position of the signal peptide cleavage has not been experimentally proven.

It is found in the periplasm. It catalyses the reaction L-methionyl-[protein] + a quinone + H2O = L-methionyl-(S)-S-oxide-[protein] + a quinol. The catalysed reaction is L-methionyl-[protein] + a quinone + H2O = L-methionyl-(R)-S-oxide-[protein] + a quinol. Its function is as follows. Part of the MsrPQ system that repairs oxidized periplasmic proteins containing methionine sulfoxide residues (Met-O), using respiratory chain electrons. Thus protects these proteins from oxidative-stress damage caused by reactive species of oxygen and chlorine generated by the host defense mechanisms. MsrPQ is essential for the maintenance of envelope integrity under bleach stress, rescuing a wide series of structurally unrelated periplasmic proteins from methionine oxidation, including the primary periplasmic chaperone SurA and the lipoprotein Pal. The catalytic subunit MsrP is non-stereospecific, being able to reduce both (R-) and (S-) diastereoisomers of methionine sulfoxide. This Shigella sonnei (strain Ss046) protein is Protein-methionine-sulfoxide reductase catalytic subunit MsrP.